The primary structure comprises 742 residues: 5-methyltetrahydropteroyltriglutamate--homocysteine methyltransferase (742 aa).

Residues 18 to 21 (REWK) and Lys-112 each bind 5-methyltetrahydropteroyltri-L-glutamate. L-homocysteine contacts are provided by residues 420–422 (IGS) and Glu-473. Residues 420–422 (IGS) and Glu-473 each bind L-methionine. Trp-550 contacts 5-methyltetrahydropteroyltri-L-glutamate. Asp-588 contributes to the L-homocysteine binding site. Asp-588 serves as a coordination point for L-methionine. Glu-594 serves as a coordination point for 5-methyltetrahydropteroyltri-L-glutamate. Residues His-630, Cys-632, and Glu-654 each coordinate Zn(2+). The Proton donor role is filled by His-683. Position 715 (Cys-715) interacts with Zn(2+).

The protein belongs to the vitamin-B12 independent methionine synthase family. Zn(2+) serves as cofactor.

The catalysed reaction is 5-methyltetrahydropteroyltri-L-glutamate + L-homocysteine = tetrahydropteroyltri-L-glutamate + L-methionine. The protein operates within amino-acid biosynthesis; L-methionine biosynthesis via de novo pathway; L-methionine from L-homocysteine (MetE route): step 1/1. Catalyzes the transfer of a methyl group from 5-methyltetrahydrofolate to homocysteine resulting in methionine formation. The polypeptide is 5-methyltetrahydropteroyltriglutamate--homocysteine methyltransferase (Staphylococcus aureus (strain JH9)).